A 288-amino-acid polypeptide reads, in one-letter code: Octanoyl-[GcvH]:protein N-octanoyltransferase (288 aa).

The BPL/LPL catalytic domain maps to 44 to 253 (AGGPPTFRLW…VLESAMGPQV (210 aa)). The active-site Acyl-thioester intermediate is C148. Residues 269–288 (GREGASETDPRRVAYGVDRP) are disordered. Residues 272 to 288 (GASETDPRRVAYGVDRP) are compositionally biased toward basic and acidic residues.

This sequence belongs to the octanoyltransferase LipL family.

It catalyses the reaction N(6)-octanoyl-L-lysyl-[glycine-cleavage complex H protein] + L-lysyl-[lipoyl-carrier protein] = N(6)-octanoyl-L-lysyl-[lipoyl-carrier protein] + L-lysyl-[glycine-cleavage complex H protein]. It participates in protein modification; protein lipoylation via endogenous pathway; protein N(6)-(lipoyl)lysine from octanoyl-[acyl-carrier-protein]. Its function is as follows. Catalyzes the amidotransfer (transamidation) of the octanoyl moiety from octanoyl-GcvH to the lipoyl domain of the E2 subunit of lipoate-dependent enzymes. In Kyrpidia tusciae (strain DSM 2912 / NBRC 15312 / T2) (Bacillus tusciae), this protein is Octanoyl-[GcvH]:protein N-octanoyltransferase.